Reading from the N-terminus, the 341-residue chain is HTH-type transcriptional repressor PurR (341 aa).

Residues 2-56 enclose the HTH lacI-type domain; that stretch reads ATIKDVAKHAGVSTTTVSHVINKTRFVAENTKAAVWAAIKELHYSPSAVARSLKV. Residues 4-23 constitute a DNA-binding region (H-T-H motif); the sequence is IKDVAKHAGVSTTTVSHVIN. A DNA-binding region spans residues 48-56; sequence SAVARSLKV. Hypoxanthine contacts are provided by Tyr-73, Arg-190, Thr-192, Phe-221, and Asp-275.

As to quaternary structure, homodimer.

Its pathway is purine metabolism; purine nucleotide biosynthesis [regulation]. Is the main repressor of the genes involved in the de novo synthesis of purine nucleotides, regulating purB, purC, purEK, purF, purHD, purL, purMN and guaBA expression. PurR is allosterically activated to bind its cognate DNA by binding the purine corepressors, hypoxanthine or guanine, thereby effecting transcription repression. The chain is HTH-type transcriptional repressor PurR from Yersinia pseudotuberculosis serotype O:1b (strain IP 31758).